The following is a 126-amino-acid chain: Aspartate 1-decarboxylase (126 aa).

Catalysis depends on S25, which acts as the Schiff-base intermediate with substrate; via pyruvic acid. Position 25 is a pyruvic acid (Ser) (S25). T57 lines the substrate pocket. Residue Y58 is the Proton donor of the active site. 73 to 75 serves as a coordination point for substrate; sequence GAA.

It belongs to the PanD family. In terms of assembly, heterooctamer of four alpha and four beta subunits. The cofactor is pyruvate. Is synthesized initially as an inactive proenzyme, which is activated by self-cleavage at a specific serine bond to produce a beta-subunit with a hydroxyl group at its C-terminus and an alpha-subunit with a pyruvoyl group at its N-terminus.

The protein localises to the cytoplasm. The enzyme catalyses L-aspartate + H(+) = beta-alanine + CO2. It functions in the pathway cofactor biosynthesis; (R)-pantothenate biosynthesis; beta-alanine from L-aspartate: step 1/1. Functionally, catalyzes the pyruvoyl-dependent decarboxylation of aspartate to produce beta-alanine. The polypeptide is Aspartate 1-decarboxylase (Salmonella arizonae (strain ATCC BAA-731 / CDC346-86 / RSK2980)).